We begin with the raw amino-acid sequence, 356 residues long: Histidinol-phosphate aminotransferase (356 aa).

At Lys-214 the chain carries N6-(pyridoxal phosphate)lysine.

Belongs to the class-II pyridoxal-phosphate-dependent aminotransferase family. Histidinol-phosphate aminotransferase subfamily. In terms of assembly, homodimer. Requires pyridoxal 5'-phosphate as cofactor.

It catalyses the reaction L-histidinol phosphate + 2-oxoglutarate = 3-(imidazol-4-yl)-2-oxopropyl phosphate + L-glutamate. It functions in the pathway amino-acid biosynthesis; L-histidine biosynthesis; L-histidine from 5-phospho-alpha-D-ribose 1-diphosphate: step 7/9. This is Histidinol-phosphate aminotransferase from Escherichia fergusonii (strain ATCC 35469 / DSM 13698 / CCUG 18766 / IAM 14443 / JCM 21226 / LMG 7866 / NBRC 102419 / NCTC 12128 / CDC 0568-73).